A 444-amino-acid polypeptide reads, in one-letter code: IMP-specific 5'-nucleotidase 1 (444 aa).

ATP-binding residues include K132 and H150. Catalysis depends on D170, which acts as the Nucleophile. The IMP site is built by D170, D172, D178, T204, S207, S308, D363, and K371. Residues D170 and D172 each coordinate Mg(2+). Residue D172 is the Proton donor of the active site. Mg(2+) is bound at residue D394.

It belongs to the ISN1 family. Homotetramer. Requires Mg(2+) as cofactor.

The protein resides in the cytoplasm. The enzyme catalyses IMP + H2O = inosine + phosphate. At physiological pH, allosterically activated by ATP. ATP binding is a prerequisite to magnesium and substrate binding. ATP binds to 2 of the subunits in the homotetramer inducing a closure of these 2 subunits and the release of the C-terminal loop, thereby activating the enzyme. In this conformation, the enzyme can bind IMP and magnesium which ultimately leads to the release of ATP. At pH 5, ATP does not have an allosteric role and is dispensable for magnesium and substrate binding. Inhibited by phosphocholine and D-myo-inositol-4-phosphate. Specifically, catalyzes the dephosphorylation of inosine monophosphate (IMP) into inosine. By dephosphorylating IMP, plays a role in the purine salvage pathway. Does not have phosphotransferase activity with IMP as phosphate donor and adenosine as phosphate acceptor. The sequence is that of IMP-specific 5'-nucleotidase 1 from Plasmodium falciparum (isolate 3D7).